A 347-amino-acid polypeptide reads, in one-letter code: N-acetyl-gamma-glutamyl-phosphate reductase (347 aa).

C152 is a catalytic residue.

It belongs to the NAGSA dehydrogenase family. Type 1 subfamily.

It localises to the cytoplasm. The enzyme catalyses N-acetyl-L-glutamate 5-semialdehyde + phosphate + NADP(+) = N-acetyl-L-glutamyl 5-phosphate + NADPH + H(+). The protein operates within amino-acid biosynthesis; L-arginine biosynthesis; N(2)-acetyl-L-ornithine from L-glutamate: step 3/4. Its function is as follows. Catalyzes the NADPH-dependent reduction of N-acetyl-5-glutamyl phosphate to yield N-acetyl-L-glutamate 5-semialdehyde. This is N-acetyl-gamma-glutamyl-phosphate reductase from Neisseria gonorrhoeae (strain NCCP11945).